Consider the following 274-residue polypeptide: Large ribosomal subunit protein uL2 (274 aa).

The segment at 221 to 274 (RGTAMNPVDHPHGGGEGRNFGKHPVTPWGVQTKGKKTRNNKRTDKSIVRRRSKK) is disordered.

The protein belongs to the universal ribosomal protein uL2 family. As to quaternary structure, part of the 50S ribosomal subunit. Forms a bridge to the 30S subunit in the 70S ribosome.

One of the primary rRNA binding proteins. Required for association of the 30S and 50S subunits to form the 70S ribosome, for tRNA binding and peptide bond formation. It has been suggested to have peptidyltransferase activity; this is somewhat controversial. Makes several contacts with the 16S rRNA in the 70S ribosome. In Hamiltonella defensa subsp. Acyrthosiphon pisum (strain 5AT), this protein is Large ribosomal subunit protein uL2.